Reading from the N-terminus, the 211-residue chain is Endonuclease III (211 aa).

Positions 108 to 127 constitute a HhH domain; the sequence is REALEALAGVGRKTANVVLN. [4Fe-4S] cluster contacts are provided by Cys-187, Cys-194, Cys-197, and Cys-203.

This sequence belongs to the Nth/MutY family. [4Fe-4S] cluster serves as cofactor.

The catalysed reaction is 2'-deoxyribonucleotide-(2'-deoxyribose 5'-phosphate)-2'-deoxyribonucleotide-DNA = a 3'-end 2'-deoxyribonucleotide-(2,3-dehydro-2,3-deoxyribose 5'-phosphate)-DNA + a 5'-end 5'-phospho-2'-deoxyribonucleoside-DNA + H(+). Its function is as follows. DNA repair enzyme that has both DNA N-glycosylase activity and AP-lyase activity. The DNA N-glycosylase activity releases various damaged pyrimidines from DNA by cleaving the N-glycosidic bond, leaving an AP (apurinic/apyrimidinic) site. The AP-lyase activity cleaves the phosphodiester bond 3' to the AP site by a beta-elimination, leaving a 3'-terminal unsaturated sugar and a product with a terminal 5'-phosphate. The polypeptide is Endonuclease III (Haemophilus influenzae (strain ATCC 51907 / DSM 11121 / KW20 / Rd)).